Reading from the N-terminus, the 131-residue chain is Small ribosomal subunit protein uS11 (131 aa).

This sequence belongs to the universal ribosomal protein uS11 family. As to quaternary structure, part of the 30S ribosomal subunit. Interacts with proteins S7 and S18. Binds to IF-3.

In terms of biological role, located on the platform of the 30S subunit, it bridges several disparate RNA helices of the 16S rRNA. Forms part of the Shine-Dalgarno cleft in the 70S ribosome. In Halorhodospira halophila (strain DSM 244 / SL1) (Ectothiorhodospira halophila (strain DSM 244 / SL1)), this protein is Small ribosomal subunit protein uS11.